Reading from the N-terminus, the 156-residue chain is ATP synthase subunit b (156 aa).

Residues 7 to 29 traverse the membrane as a helical segment; that stretch reads LFAQMVVFLVLAWFTMKFVWPPL.

It belongs to the ATPase B chain family. As to quaternary structure, F-type ATPases have 2 components, F(1) - the catalytic core - and F(0) - the membrane proton channel. F(1) has five subunits: alpha(3), beta(3), gamma(1), delta(1), epsilon(1). F(0) has three main subunits: a(1), b(2) and c(10-14). The alpha and beta chains form an alternating ring which encloses part of the gamma chain. F(1) is attached to F(0) by a central stalk formed by the gamma and epsilon chains, while a peripheral stalk is formed by the delta and b chains.

It localises to the cell inner membrane. Functionally, f(1)F(0) ATP synthase produces ATP from ADP in the presence of a proton or sodium gradient. F-type ATPases consist of two structural domains, F(1) containing the extramembraneous catalytic core and F(0) containing the membrane proton channel, linked together by a central stalk and a peripheral stalk. During catalysis, ATP synthesis in the catalytic domain of F(1) is coupled via a rotary mechanism of the central stalk subunits to proton translocation. Component of the F(0) channel, it forms part of the peripheral stalk, linking F(1) to F(0). This is ATP synthase subunit b from Burkholderia vietnamiensis (strain G4 / LMG 22486) (Burkholderia cepacia (strain R1808)).